The sequence spans 418 residues: MLPMNRNTLGLAVTIATVFVSSTVTAEVDFHGYVRAGIGISGENGQQVRYQSNKVGRLGNEDDLYSEILLGKELYSQDGKSFYVDSMMALLSDGSNDFEGTNTSCELLKNSAGDVDDVSCDNDAEFAIRQFNVQAKGLIPSNPDAVSWAGKRYYQRHDIHISDFYYWDTSGSGAGVENLSVGTGKLSLAVLRQDSGDINVNNFDIRYAEIALWQDANLELGFNYGLINETDAQKAEVGEDPLMLTAEITMANVIGGLNKTIFQYATESYGEQMAGLGAGNSPDATSDDGIDGYRIINWGVIAPTKTWEIGHQIVYANSSFDSQDDHSIFNVVVRPMYKWDENMRTVFEGGWFTEEDNKVDSSGSKFTVAQAWSAGSSFWARPELRVYASYLKDYENDNAFGIGNDTEYNLGVQVEAWW.

A signal peptide spans 1–26 (MLPMNRNTLGLAVTIATVFVSSTVTA).

This sequence belongs to the porin LamB (TC 1.B.3) family. Homotrimer formed of three 18-stranded antiparallel beta-barrels, containing three independent channels.

Its subcellular location is the cell outer membrane. The catalysed reaction is beta-maltose(in) = beta-maltose(out). Its function is as follows. Involved in the transport of maltose and maltodextrins. This is Maltoporin from Photobacterium profundum (strain SS9).